Reading from the N-terminus, the 749-residue chain is 5-methyltetrahydropteroyltriglutamate--homocysteine methyltransferase (749 aa).

5-methyltetrahydropteroyltri-L-glutamate is bound by residues 15–18 and K114; that span reads RELK. L-homocysteine is bound by residues 425–427 and E478; that span reads IGS. Residues 425–427 and E478 each bind L-methionine; that span reads IGS. W555 contacts 5-methyltetrahydropteroyltri-L-glutamate. L-homocysteine is bound at residue D593. An L-methionine-binding site is contributed by D593. E599 lines the 5-methyltetrahydropteroyltri-L-glutamate pocket. Zn(2+) is bound by residues H636, C638, and E660. H689 functions as the Proton donor in the catalytic mechanism. Position 721 (C721) interacts with Zn(2+).

This sequence belongs to the vitamin-B12 independent methionine synthase family. It depends on Zn(2+) as a cofactor.

The catalysed reaction is 5-methyltetrahydropteroyltri-L-glutamate + L-homocysteine = tetrahydropteroyltri-L-glutamate + L-methionine. It functions in the pathway amino-acid biosynthesis; L-methionine biosynthesis via de novo pathway; L-methionine from L-homocysteine (MetE route): step 1/1. In terms of biological role, catalyzes the transfer of a methyl group from 5-methyltetrahydrofolate to homocysteine resulting in methionine formation. This Streptococcus pneumoniae serotype 19F (strain G54) protein is 5-methyltetrahydropteroyltriglutamate--homocysteine methyltransferase.